We begin with the raw amino-acid sequence, 421 residues long: 5-methylthioadenosine/S-adenosylhomocysteine deaminase (421 aa).

2 residues coordinate Zn(2+): His-60 and His-62. Substrate contacts are provided by Glu-89 and His-181. His-208 contributes to the Zn(2+) binding site. 2 residues coordinate substrate: Glu-211 and Asp-296. Zn(2+) is bound at residue Asp-296.

The protein belongs to the metallo-dependent hydrolases superfamily. MTA/SAH deaminase family. Requires Zn(2+) as cofactor.

The enzyme catalyses S-adenosyl-L-homocysteine + H2O + H(+) = S-inosyl-L-homocysteine + NH4(+). It catalyses the reaction S-methyl-5'-thioadenosine + H2O + H(+) = S-methyl-5'-thioinosine + NH4(+). Its function is as follows. Catalyzes the deamination of 5-methylthioadenosine and S-adenosyl-L-homocysteine into 5-methylthioinosine and S-inosyl-L-homocysteine, respectively. Is also able to deaminate adenosine. The chain is 5-methylthioadenosine/S-adenosylhomocysteine deaminase from Pyrococcus horikoshii (strain ATCC 700860 / DSM 12428 / JCM 9974 / NBRC 100139 / OT-3).